Consider the following 817-residue polypeptide: MEEMEEELKCPVCGSFYREPIILPCSHNLCQACARNILVQTPESESPQSRRASGSGVSDYDYLDLDKMSLYSEADSGYGSYGGFASAPTTPCQKSPNGVRVFPPAMPPPPTHLSPALAPVPRNSCITCPQCHRSLILDDRGLRGFPKNRVLEGVIDRYQQSKAAALKCQLCEKAPKEATVMCEQCDVFYCDPCRLRCHPPRGPLAKHRLVPPAQGRVSRRLSPRKVSTCTDHELENHSMYCVQCKMPVCYQCLEEGKHSSHEVKALGAMWKLHKSQLSQALNGLSDRAKEAKEFLVQLRTMVQQIQENSVEFEACLVAQCDALIDALNRRKAQLLARVNKEHEHKLKVVRDQISHCTVKLRQTTGLMEYCLEVIKENDPSGFLQISDALIRRVHLTEDQWGKGTLTPRMTTDFDLSLDNSPLLQSIHQLDFVQVKASSPVPATPILQLEECCTHNNSATLSWKQPPLSTVAADGYILELDDGSGGQFREVYVGKETMCTVDGLHFNSTYNARVKAFNKTGVSPYSKTLVLQTSEAAGAHETKPMKDTDSEEQTLPFPVPSERLPLRRMSPFSSTLNLQPSFPGRSYFDFRSSPHQLSLHSSLQSLNAPGCNFETQSASYSQLVDIKKLLAVAWFAFDPGSAHSDIIFSNDNLTVTCSSYDDRVVLGKTGFSKGVHYWELTIDRYDNHPDPAFGVARIDVMKDMMLGKDDKAWAMYVDNNRSWFMHNNSHTNRTEGGITKGATIGVLLDLNRKTLTFFVNNEQQGPIAFENVEGLFFPAVSLNRNVQVSLWAPGLRACSGCYFKVCPGAVKSPQAPAP.

Residues 10-50 (CPVCGSFYREPIILPCSHNLCQACARNILVQTPESESPQSR) form an RING-type zinc finger. Thr-41 is subject to Phosphothreonine. Ser-44, Ser-46, Ser-49, and Ser-53 each carry phosphoserine. 2 consecutive B box-type zinc fingers follow at residues 163–212 (AAAL…LVPP) and 224–266 (RKVS…VKAL). The Zn(2+) site is built by Cys-168, Cys-171, Cys-193, His-198, Cys-229, His-232, Cys-252, and His-258. The stretch at 273-340 (HKSQLSQALN…KAQLLARVNK (68 aa)) forms a coiled coil. The 59-residue stretch at 374–432 (IKENDPSGFLQISDALIRRVHLTEDQWGKGTLTPRMTTDFDLSLDNSPLLQSIHQLDFV) folds into the COS domain. The region spanning 440–535 (VPATPILQLE…KTLVLQTSEA (96 aa)) is the Fibronectin type-III domain. The tract at residues 535–557 (AAGAHETKPMKDTDSEEQTLPFP) is disordered. The segment covering 537-547 (GAHETKPMKDT) has biased composition (basic and acidic residues). The region spanning 613-794 (ETQSASYSQL…VQVSLWAPGL (182 aa)) is the B30.2/SPRY domain.

This sequence belongs to the TRIM/RBCC family. Interacts with SNAP25. Post-translationally, auto-ubiquitinated. As to expression, brain. Expression is higher in the cerebral cortex and hippocampus (at protein level). Its expression is mainly confined to the central nervous system. The developing neocortex, the dorsal thalamus, the midbrain, the basal area of the hindbrain and spinal cord show high level of expression during embryogenesis. In adult brain, it is detected in the Purkinje cells of the cerebellum, in the hippocampus, and in the cortex.

The protein resides in the cytoplasm. Its subcellular location is the cell projection. The protein localises to the dendrite. It is found in the cytoplasmic vesicle. It localises to the secretory vesicle. The protein resides in the synaptic vesicle. Its subcellular location is the synapse. The protein localises to the cytoskeleton. It carries out the reaction S-ubiquitinyl-[E2 ubiquitin-conjugating enzyme]-L-cysteine + [acceptor protein]-L-lysine = [E2 ubiquitin-conjugating enzyme]-L-cysteine + N(6)-ubiquitinyl-[acceptor protein]-L-lysine.. It functions in the pathway protein modification; protein ubiquitination. Its function is as follows. E3 ubiquitin-protein ligase which ubiquitinates itself in cooperation with an E2 enzyme UBE2D2/UBC4 and serves as a targeting signal for proteasomal degradation. May play a role in regulation of neuronal functions. May act as a regulator of synaptic vesicle exocytosis by controlling the availability of SNAP25 for the SNARE complex formation. The chain is E3 ubiquitin-protein ligase TRIM9 (Trim9) from Mus musculus (Mouse).